The primary structure comprises 143 residues: Ribosome-binding factor A (143 aa).

A disordered region spans residues 123-143; that stretch reads DKSLQENYKQNDKETKAEKLR.

Belongs to the RbfA family. Monomer. Binds 30S ribosomal subunits, but not 50S ribosomal subunits or 70S ribosomes.

Its subcellular location is the cytoplasm. Functionally, one of several proteins that assist in the late maturation steps of the functional core of the 30S ribosomal subunit. Associates with free 30S ribosomal subunits (but not with 30S subunits that are part of 70S ribosomes or polysomes). Required for efficient processing of 16S rRNA. May interact with the 5'-terminal helix region of 16S rRNA. This chain is Ribosome-binding factor A, found in Francisella tularensis subsp. novicida (strain U112).